A 258-amino-acid chain; its full sequence is Type III pantothenate kinase (258 aa).

6-13 (DVGNTQIF) contributes to the ATP binding site. A substrate-binding site is contributed by 107 to 110 (GADR). The active-site Proton acceptor is Asp-109. Position 130 (Asp-130) interacts with K(+). Thr-133 provides a ligand contact to ATP. Thr-185 serves as a coordination point for substrate.

It belongs to the type III pantothenate kinase family. In terms of assembly, homodimer. The cofactor is NH4(+). K(+) is required as a cofactor.

Its subcellular location is the cytoplasm. It catalyses the reaction (R)-pantothenate + ATP = (R)-4'-phosphopantothenate + ADP + H(+). Its pathway is cofactor biosynthesis; coenzyme A biosynthesis; CoA from (R)-pantothenate: step 1/5. In terms of biological role, catalyzes the phosphorylation of pantothenate (Pan), the first step in CoA biosynthesis. The chain is Type III pantothenate kinase from Elusimicrobium minutum (strain Pei191).